The primary structure comprises 514 residues: ATP synthase subunit alpha (514 aa).

170 to 177 (GDRQIGKT) contributes to the ATP binding site.

Belongs to the ATPase alpha/beta chains family. In terms of assembly, F-type ATPases have 2 components, CF(1) - the catalytic core - and CF(0) - the membrane proton channel. CF(1) has five subunits: alpha(3), beta(3), gamma(1), delta(1), epsilon(1). CF(0) has three main subunits: a(1), b(2) and c(9-12). The alpha and beta chains form an alternating ring which encloses part of the gamma chain. CF(1) is attached to CF(0) by a central stalk formed by the gamma and epsilon chains, while a peripheral stalk is formed by the delta and b chains.

The protein localises to the cell inner membrane. It catalyses the reaction ATP + H2O + 4 H(+)(in) = ADP + phosphate + 5 H(+)(out). Functionally, produces ATP from ADP in the presence of a proton gradient across the membrane. The alpha chain is a regulatory subunit. This is ATP synthase subunit alpha from Pseudomonas putida (strain ATCC 47054 / DSM 6125 / CFBP 8728 / NCIMB 11950 / KT2440).